Consider the following 421-residue polypeptide: Acetate kinase (421 aa).

Asparagine 7 lines the Mg(2+) pocket. Lysine 14 serves as a coordination point for ATP. Arginine 91 is a binding site for substrate. The active-site Proton donor/acceptor is aspartate 148. ATP-binding positions include 208–212 and 283–285; these read HIGNG and DRR. Glutamate 387 is a Mg(2+) binding site.

The protein belongs to the acetokinase family. As to quaternary structure, homodimer. The cofactor is Mg(2+). Mn(2+) serves as cofactor.

Its subcellular location is the cytoplasm. It catalyses the reaction acetate + ATP = acetyl phosphate + ADP. Its pathway is metabolic intermediate biosynthesis; acetyl-CoA biosynthesis; acetyl-CoA from acetate: step 1/2. Catalyzes the formation of acetyl phosphate from acetate and ATP. Can also catalyze the reverse reaction. The sequence is that of Acetate kinase from Trichlorobacter lovleyi (strain ATCC BAA-1151 / DSM 17278 / SZ) (Geobacter lovleyi).